Consider the following 572-residue polypeptide: Urease subunit alpha (572 aa).

The Urease domain occupies 134-572; sequence GGIDSHIHFI…LPMTQRYFLF (439 aa). Ni(2+) contacts are provided by His139, His141, and Lys222. At Lys222 the chain carries N6-carboxylysine. A substrate-binding site is contributed by His224. The Ni(2+) site is built by His251 and His277. His325 functions as the Proton donor in the catalytic mechanism. Asp365 is a Ni(2+) binding site.

Belongs to the metallo-dependent hydrolases superfamily. Urease alpha subunit family. Heterotrimer of UreA (gamma), UreB (beta) and UreC (alpha) subunits. Three heterotrimers associate to form the active enzyme. Ni cation is required as a cofactor. Post-translationally, carboxylation allows a single lysine to coordinate two nickel ions.

The protein resides in the cytoplasm. The catalysed reaction is urea + 2 H2O + H(+) = hydrogencarbonate + 2 NH4(+). It functions in the pathway nitrogen metabolism; urea degradation; CO(2) and NH(3) from urea (urease route): step 1/1. This chain is Urease subunit alpha, found in Polaromonas sp. (strain JS666 / ATCC BAA-500).